We begin with the raw amino-acid sequence, 95 residues long: Aspartyl/glutamyl-tRNA(Asn/Gln) amidotransferase subunit C (95 aa).

It belongs to the GatC family. Heterotrimer of A, B and C subunits.

It carries out the reaction L-glutamyl-tRNA(Gln) + L-glutamine + ATP + H2O = L-glutaminyl-tRNA(Gln) + L-glutamate + ADP + phosphate + H(+). The catalysed reaction is L-aspartyl-tRNA(Asn) + L-glutamine + ATP + H2O = L-asparaginyl-tRNA(Asn) + L-glutamate + ADP + phosphate + 2 H(+). Allows the formation of correctly charged Asn-tRNA(Asn) or Gln-tRNA(Gln) through the transamidation of misacylated Asp-tRNA(Asn) or Glu-tRNA(Gln) in organisms which lack either or both of asparaginyl-tRNA or glutaminyl-tRNA synthetases. The reaction takes place in the presence of glutamine and ATP through an activated phospho-Asp-tRNA(Asn) or phospho-Glu-tRNA(Gln). The polypeptide is Aspartyl/glutamyl-tRNA(Asn/Gln) amidotransferase subunit C (Rhodopseudomonas palustris (strain ATCC BAA-98 / CGA009)).